The chain runs to 181 residues: Adenine phosphoribosyltransferase (181 aa).

It belongs to the purine/pyrimidine phosphoribosyltransferase family. Homodimer.

It is found in the cytoplasm. The catalysed reaction is AMP + diphosphate = 5-phospho-alpha-D-ribose 1-diphosphate + adenine. Its pathway is purine metabolism; AMP biosynthesis via salvage pathway; AMP from adenine: step 1/1. Functionally, catalyzes a salvage reaction resulting in the formation of AMP, that is energically less costly than de novo synthesis. The sequence is that of Adenine phosphoribosyltransferase from Rhodopseudomonas palustris (strain ATCC BAA-98 / CGA009).